The sequence spans 333 residues: Starch-binding domain-containing protein 1 (333 aa).

Residues 1–6 (MGAVWS) lie on the Extracellular side of the membrane. Residues 7–23 (ALLVGGGLAGALILWLL) form a helical membrane-spanning segment. The Cytoplasmic segment spans residues 24–333 (RGDSGAPGKD…KVVHGWWGIH (310 aa)). 2 disordered regions span residues 31–73 (GKDG…ELVS) and 106–139 (NAREYVPVGKVPDTHSRANSETSRNQSPESRVGE). The span at 50 to 61 (PGGGPGGGGSGG) shows a compositional bias: gly residues. At S67 the chain carries Phosphoserine. Over residues 124–134 (NSETSRNQSPE) the composition is skewed to polar residues. Phosphoserine occurs at positions 135 and 162. Positions 181–187 (HEDWEVV) match the LIR motif. Residues S191, S192, S201, S205, S208, S216, and S219 each carry the phosphoserine modification. The 100-residue stretch at 233–332 (SVKPRQVSIQ…DKVVHGWWGI (100 aa)) folds into the CBM20 domain.

In terms of assembly, interacts with the ATG8 family proteins GABARAP and GABARAPL1. Interacts with several glycogen-associated proteins, such as GYS2 (liver glycogen synthase), GDE (glycogen debranching enzyme), GBE1 (glycogen branching enzyme 1) and EPM2A (Laforin). Ubiquitinated, which leads to proteasomal degradation.

The protein resides in the preautophagosomal structure membrane. It localises to the endoplasmic reticulum membrane. The protein localises to the cell membrane. Its subcellular location is the sarcolemma. It is found in the T-tubule. Acts as a cargo receptor for glycogen. Delivers its cargo to an autophagic pathway called glycophagy, resulting in the transport of glycogen to lysosomes. The protein is Starch-binding domain-containing protein 1 of Rattus norvegicus (Rat).